Here is a 502-residue protein sequence, read N- to C-terminus: Lysine--tRNA ligase (502 aa).

Residues E413 and E420 each contribute to the Mg(2+) site.

The protein belongs to the class-II aminoacyl-tRNA synthetase family. Homodimer. Mg(2+) serves as cofactor.

Its subcellular location is the cytoplasm. It catalyses the reaction tRNA(Lys) + L-lysine + ATP = L-lysyl-tRNA(Lys) + AMP + diphosphate. The chain is Lysine--tRNA ligase from Haemophilus influenzae (strain PittGG).